Consider the following 194-residue polypeptide: Peptidyl-tRNA hydrolase (194 aa).

Tyrosine 17 is a tRNA binding site. Histidine 22 (proton acceptor) is an active-site residue. Positions 69, 71, and 117 each coordinate tRNA.

It belongs to the PTH family. Monomer.

It localises to the cytoplasm. The catalysed reaction is an N-acyl-L-alpha-aminoacyl-tRNA + H2O = an N-acyl-L-amino acid + a tRNA + H(+). Functionally, hydrolyzes ribosome-free peptidyl-tRNAs (with 1 or more amino acids incorporated), which drop off the ribosome during protein synthesis, or as a result of ribosome stalling. Its function is as follows. Catalyzes the release of premature peptidyl moieties from peptidyl-tRNA molecules trapped in stalled 50S ribosomal subunits, and thus maintains levels of free tRNAs and 50S ribosomes. This is Peptidyl-tRNA hydrolase from Renibacterium salmoninarum (strain ATCC 33209 / DSM 20767 / JCM 11484 / NBRC 15589 / NCIMB 2235).